Here is a 261-residue protein sequence, read N- to C-terminus: Thiazole synthase (261 aa).

K102 functions as the Schiff-base intermediate with DXP in the catalytic mechanism. 1-deoxy-D-xylulose 5-phosphate is bound by residues G163, 189–190 (AG), and 211–212 (NT).

This sequence belongs to the ThiG family. In terms of assembly, homotetramer. Forms heterodimers with either ThiH or ThiS.

Its subcellular location is the cytoplasm. The catalysed reaction is [ThiS sulfur-carrier protein]-C-terminal-Gly-aminoethanethioate + 2-iminoacetate + 1-deoxy-D-xylulose 5-phosphate = [ThiS sulfur-carrier protein]-C-terminal Gly-Gly + 2-[(2R,5Z)-2-carboxy-4-methylthiazol-5(2H)-ylidene]ethyl phosphate + 2 H2O + H(+). It functions in the pathway cofactor biosynthesis; thiamine diphosphate biosynthesis. Catalyzes the rearrangement of 1-deoxy-D-xylulose 5-phosphate (DXP) to produce the thiazole phosphate moiety of thiamine. Sulfur is provided by the thiocarboxylate moiety of the carrier protein ThiS. In vitro, sulfur can be provided by H(2)S. This is Thiazole synthase from Myxococcus xanthus (strain DK1622).